Here is a 120-residue protein sequence, read N- to C-terminus: Small ribosomal subunit protein bS16 (120 aa).

Residues 81 to 120 (GLAKRPARNNPQKAEPGEKAKERAAKRAEKAAAPAEDAAA) form a disordered region. Basic and acidic residues predominate over residues 95–110 (EPGEKAKERAAKRAEK). Residues 111–120 (AAAPAEDAAA) show a composition bias toward low complexity.

It belongs to the bacterial ribosomal protein bS16 family.

The protein is Small ribosomal subunit protein bS16 of Methylobacterium radiotolerans (strain ATCC 27329 / DSM 1819 / JCM 2831 / NBRC 15690 / NCIMB 10815 / 0-1).